Reading from the N-terminus, the 299-residue chain is Recombination-associated protein RdgC (299 aa).

The protein belongs to the RdgC family.

It is found in the cytoplasm. It localises to the nucleoid. Functionally, may be involved in recombination. This is Recombination-associated protein RdgC from Neisseria meningitidis serogroup C (strain 053442).